We begin with the raw amino-acid sequence, 217 residues long: MTTNLFNIFDPSTTIFNLEMNWISTLLIILFMPNFLWILPNRMNWLLFKMFNMLNNEMLMLYKMKKTKSPAFLFISLFMFILLNNFFSLFPYIFSSSSHMVFSVTLAIPFWMFFIILSTCKNTKNMIAHLIPLNTPIYLAPLMTIIETMSIIIRPMSLSIRLTANLIAGHLLMTLLNFNSLMIIIIFIQMFMMIFELCVALIQSYVFSILSSLYSSE.

The next 6 helical transmembrane spans lie at 20–40 (MNWI…WILP), 70–90 (PAFL…FSLF), 100–120 (MVFS…LSTC), 126–146 (MIAH…MTII), 166–188 (LIAG…IIFI), and 193–215 (MIFE…SLYS).

It belongs to the ATPase A chain family. In terms of assembly, component of the ATP synthase complex composed at least of ATP5F1A/subunit alpha, ATP5F1B/subunit beta, ATP5MC1/subunit c (homooctomer), MT-ATP6/subunit a, MT-ATP8/subunit 8, ATP5ME/subunit e, ATP5MF/subunit f, ATP5MG/subunit g, ATP5MK/subunit k, ATP5MJ/subunit j, ATP5F1C/subunit gamma, ATP5F1D/subunit delta, ATP5F1E/subunit epsilon, ATP5PF/subunit F6, ATP5PB/subunit b, ATP5PD/subunit d, ATP5PO/subunit OSCP. ATP synthase complex consists of a soluble F(1) head domain (subunits alpha(3) and beta(3)) - the catalytic core - and a membrane F(0) domain - the membrane proton channel (subunits c, a, 8, e, f, g, k and j). These two domains are linked by a central stalk (subunits gamma, delta, and epsilon) rotating inside the F1 region and a stationary peripheral stalk (subunits F6, b, d, and OSCP). Interacts with DNAJC30; interaction is direct.

It is found in the mitochondrion inner membrane. It catalyses the reaction H(+)(in) = H(+)(out). Functionally, subunit a, of the mitochondrial membrane ATP synthase complex (F(1)F(0) ATP synthase or Complex V) that produces ATP from ADP in the presence of a proton gradient across the membrane which is generated by electron transport complexes of the respiratory chain. ATP synthase complex consist of a soluble F(1) head domain - the catalytic core - and a membrane F(1) domain - the membrane proton channel. These two domains are linked by a central stalk rotating inside the F(1) region and a stationary peripheral stalk. During catalysis, ATP synthesis in the catalytic domain of F(1) is coupled via a rotary mechanism of the central stalk subunits to proton translocation. With the subunit c (ATP5MC1), forms the proton-conducting channel in the F(0) domain, that contains two crucial half-channels (inlet and outlet) that facilitate proton movement from the mitochondrial intermembrane space (IMS) into the matrix. Protons are taken up via the inlet half-channel and released through the outlet half-channel, following a Grotthuss mechanism. The chain is ATP synthase F(0) complex subunit a from Rhopalosiphum padi (Bird cherry-oat aphid).